Reading from the N-terminus, the 947-residue chain is MKGPRGSRSGRNGSPRRLVIVESPTKARKLSGYLGSAYIVESSRGHIRDLPRTAADVPAKFKSEPWARLGVNVDADFEPLYIITPEKKSTVTELKGLLQGVDELYLATDGDREGEAIAWHLMQTLKPRVPVKRMVFHEITEHAILAAAAHPRELDIDLVDAQETRRILDRLYGYEVSPVLWKKVAPKLSAGRVQSVATRIIVQRERDRMAFCSAVYWDIVAKLDASVSDPTAQPLTFVARLTAVDGLRVATGRDFGAMGTLRGDCEVSKIIVLDDLTATTLAAGLRGAQLTVASAEEKLYTRRPYPPFMTSTLQQEAGRKLRFSAERTMSIAQRLYENGYITYMRTDSTTLSESAINAARTQARQLYGEEYVSDSPRQYTRKVKNAQEAHEAIRPAGETFATPDAVCNELDGDEFRIYELVWRRTVASQMADARGTTLSLRIEGRAGEQHVVFSASGRTLTFPGFLKAYVETVDELAGGEADDAERRLPHLTSGQLLDVIDLTPDGHATNPPARYTEASLVKALEELGIGRPSTYSSIIKTVQDRGYVQKKGSALVPSWVAFAVTGLLEQHFGRLVDYDFTAAMEDELDEIANGNEQRTNWLNNFYFGGNHGVSDSIARSGGLKKLVGVNIEGIDAREVNSIKLFDDEHGRPVYVRVGKTGPYLERLLAGDDGELTPQRANLNGTLTPDELTLEVAEELFATPHEGRVLGVDPETGHEIVAKDGRYGPYVTEVLPKHDDDYGAADQGTKKTKKGRRASASQGPKPRTGSLLRSMDLQTITLEDALKLLLLPRVVGVDPASGEEITAQNGRYGPYLKRGKDSRPLTTEDQMFIITLDEALKIYAEPKRAGRQSTSPPPLRELGTDPTSGKPMLIKDGRFGPYVTDGETNASLRKGDDVVSITDERAAELLADRRARGPVKRPAKKARKVPAKKAARLAPARGISQSPR.

The Toprim domain occupies 16 to 140 (RRLVIVESPT…VKRMVFHEIT (125 aa)). Residues Glu22 and Asp109 each coordinate Mg(2+). The Topo IA-type catalytic domain maps to 155 to 614 (DIDLVDAQET…FYFGGNHGVS (460 aa)). The segment at 189 to 194 (SAGRVQ) is interaction with DNA. Tyr343 serves as the catalytic O-(5'-phospho-DNA)-tyrosine intermediate. 3 disordered regions span residues 733–771 (VLPK…GSLL), 846–888 (KRAG…GETN), and 910–947 (ADRR…QSPR). The segment covering 915–934 (RGPVKRPAKKARKVPAKKAA) has biased composition (basic residues).

This sequence belongs to the type IA topoisomerase family. In terms of assembly, monomer. Mg(2+) serves as cofactor.

The enzyme catalyses ATP-independent breakage of single-stranded DNA, followed by passage and rejoining.. In terms of biological role, releases the supercoiling and torsional tension of DNA, which is introduced during the DNA replication and transcription, by transiently cleaving and rejoining one strand of the DNA duplex. Introduces a single-strand break via transesterification at a target site in duplex DNA. The scissile phosphodiester is attacked by the catalytic tyrosine of the enzyme, resulting in the formation of a DNA-(5'-phosphotyrosyl)-enzyme intermediate and the expulsion of a 3'-OH DNA strand. The free DNA strand then undergoes passage around the unbroken strand, thus removing DNA supercoils. Finally, in the religation step, the DNA 3'-OH attacks the covalent intermediate to expel the active-site tyrosine and restore the DNA phosphodiester backbone. This is DNA topoisomerase 1 from Mycobacterium leprae (strain TN).